The sequence spans 317 residues: MPKRGKRAAAEDGEEPKSEPETKKSKGAAKKTEKEAAGEGPVLYEDPPDQKTSASGKSATLKICSWNVDGLRAWIKKKGLDWVKEEAPDILCLQETKCSENKLPAELQELPGLTHQYWSAPSDKEGYSGVGLLSRQCPLKVSYGIGEEEHDQEGRVIVAEFESFILVTAYVPNAGRGLVRLEYRQRWDEAFRKFLKDLASRKPLVLCGDLNVAHEEIDLRNPKGNKKNAGFTPQERQGFGEMLQAVPLADSFRHLYPNTAYAYTFWTYMMNARSKNVGWRLDYFLLSHSLLPALCDSKIRSKALGSDHCPITLYLAL.

Positions 1-32 (MPKRGKRAAAEDGEEPKSEPETKKSKGAAKKT) are necessary for interaction with YBX1, binding to RNA, association together with NPM1 to rRNA, endoribonuclease activity on abasic RNA and localization in the nucleoli. The segment at 1–57 (MPKRGKRAAAEDGEEPKSEPETKKSKGAAKKTEKEAAGEGPVLYEDPPDQKTSASGK) is disordered. Lysine 6 carries the post-translational modification N6-acetyllysine; by EP300. A Nuclear localization signal (NLS) motif is present at residues 8–12 (AAAED). A compositionally biased stretch (basic and acidic residues) spans 15–37 (EPKSEPETKKSKGAAKKTEKEAA). Residue serine 18 is modified to Phosphoserine. The tract at residues 22-32 (TKKSKGAAKKT) is necessary for interaction with NPM1 and for efficient rRNA binding. 4 positions are modified to N6-acetyllysine: lysine 26, lysine 30, lysine 31, and lysine 34. Position 53 is a phosphoserine (serine 53). Positions 63 to 79 (ICSWNVDGLRAWIKKKG) match the Nuclear export signal (NES) motif. Position 64 is an S-nitrosocysteine; alternate (cysteine 64). Cysteine 64 and cysteine 92 are oxidised to a cystine. Aspartate 69 provides a ligand contact to Mg(2+). S-nitrosocysteine; alternate is present on cysteine 92. Glutamate 95 is a Mg(2+) binding site. Tyrosine 170 is an active-site residue. N6-acetyllysine is present on lysine 196. Mg(2+) contacts are provided by aspartate 209 and asparagine 211. Aspartate 209 (proton donor/acceptor) is an active-site residue. At threonine 232 the chain carries Phosphothreonine; by CDK5. A mitochondrial targeting sequence (MTS) region spans residues 288-317 (HSLLPALCDSKIRSKALGSDHCPITLYLAL). Residue aspartate 307 coordinates Mg(2+). Cysteine 309 carries the S-nitrosocysteine modification.

It belongs to the DNA repair enzymes AP/ExoA family. Monomer. Homodimer; disulfide-linked. Component of the SET complex, composed of at least APEX1, SET, ANP32A, HMGB2, NME1 and TREX1. Associates with the dimer XRCC5/XRCC6 in a DNA-dependent manner. Interacts with SIRT1; the interaction is increased in the context of genotoxic stress. Interacts with HDAC1, HDAC2 and HDAC3; the interactions are not dependent on the APEX1 acetylation status. Interacts with XRCC1; the interaction is induced by SIRT1 and increased with the APEX1 acetylated form. Interacts with NPM1 (via N-terminal domain); the interaction is RNA-dependent and decreases in hydrogen peroxide-damaged cells. Interacts (via N-terminus) with YBX1 (via C-terminus); the interaction is increased in presence of APEX1 acetylated. Interacts with HNRNPL; the interaction is DNA-dependent. Interacts (via N-terminus) with KPNA1 and KPNA2. Interacts with TXN; the interaction stimulates the FOS/JUN AP-1 complex DNA-binding activity in a redox-dependent manner. Interacts with GZMA, KRT8, MDM2, POLB, PRDX6, PRPF19, RPLP0, TOMM20 and WDR77. Binds to CDK5. Mg(2+) is required as a cofactor. Requires Mn(2+) as cofactor. Phosphorylated. Phosphorylation by kinase PKC or casein kinase CK2 results in enhanced redox activity that stimulates binding of the FOS/JUN AP-1 complex to its cognate binding site. AP-endodeoxyribonuclease activity is not affected by CK2-mediated phosphorylation. Phosphorylation of Thr-232 by CDK5 in response to MPP(+)/MPTP (1-methyl-4-phenylpyridinium) reduces AP-endodeoxyribonuclease activity resulting in accumulation of DNA damage and contributing to neuronal death. Post-translationally, acetylated on Lys-6. Acetylation is increased by the transcriptional coactivator EP300 acetyltransferase, genotoxic agents like H(2)O(2) and methyl methanesulfonate (MMS). Acetylation increases its binding affinity to the negative calcium response element (nCaRE) DNA promoter. The acetylated form induces a stronger binding of YBX1 to the Y-box sequence in the MDR1 promoter than the unacetylated form. Deacetylated on lysines. Lys-6 is deacetylated by SIRT1. In terms of processing, cleaved at Lys-30 by granzyme A to create the mitochondrial form; leading in reduction of binding to DNA, AP endodeoxyribonuclease activity, redox activation of transcription factors and to enhanced cell death. Cleaved by granzyme K; leading to intracellular ROS accumulation and enhanced cell death after oxidative stress. Cys-64 and Cys-92 are nitrosylated in response to nitric oxide (NO) and lead to the exposure of the nuclear export signal (NES). Post-translationally, ubiquitinated by MDM2; leading to translocation to the cytoplasm and proteasomal degradation.

The protein localises to the nucleus. It is found in the nucleolus. It localises to the nucleus speckle. The protein resides in the endoplasmic reticulum. Its subcellular location is the cytoplasm. The protein localises to the mitochondrion. The catalysed reaction is a deoxyribonucleotide-2'-deoxyribose-5'-monophosphate-DNA + H2O = a 5'-end 2'-deoxyribose-5'-monophosphate-DNA + a 3'-end 2'-deoxyribonucleotide-DNA + H(+). It carries out the reaction Exonucleolytic cleavage in the 3'- to 5'-direction to yield nucleoside 5'-phosphates.. It catalyses the reaction a 3'-end 2'-deoxyribonucleotide-3'-phosphoglycolate-DNA + H2O = 2-phosphoglycolate + a 3'-end 2'-deoxyribonucleotide-DNA + H(+). The enzyme catalyses a 3'-end 2'-deoxyribonucleotide-8-oxoguanine-DNA + H2O = 8-oxo-dGMP + a 3'-end 2'-deoxyribonucleotide-DNA + H(+). Its activity is regulated as follows. NPM1 stimulates endodeoxyribonuclease activity on double-stranded DNA with AP sites, but inhibits endoribonuclease activity on single-stranded RNA containing AP sites. Functionally, multifunctional protein that plays a central role in the cellular response to oxidative stress. The two major activities of APEX1 are DNA repair and redox regulation of transcriptional factors. Functions as an apurinic/apyrimidinic (AP) endodeoxyribonuclease in the base excision repair (BER) pathway of DNA lesions induced by oxidative and alkylating agents. Initiates repair of AP sites in DNA by catalyzing hydrolytic incision of the phosphodiester backbone immediately adjacent to the damage, generating a single-strand break with 5'-deoxyribose phosphate and 3'-hydroxyl ends. Also incises at AP sites in the DNA strand of DNA/RNA hybrids, single-stranded DNA regions of R-loop structures, and single-stranded RNA molecules. Operates at switch sites of immunoglobulin (Ig) constant regions where it mediates Ig isotype class switch recombination. Processes AP sites induced by successive action of AICDA and UNG. Generates staggered nicks in opposite DNA strands resulting in the formation of double-strand DNA breaks that are finally resolved via non-homologous end joining repair pathway. Has 3'-5' exodeoxyribonuclease activity on mismatched deoxyribonucleotides at the 3' termini of nicked or gapped DNA molecules during short-patch BER. Possesses DNA 3' phosphodiesterase activity capable of removing lesions (such as phosphoglycolate and 8-oxoguanine) blocking the 3' side of DNA strand breaks. Also acts as an endoribonuclease involved in the control of single-stranded RNA metabolism. Plays a role in regulating MYC mRNA turnover by preferentially cleaving in between UA and CA dinucleotides of the MYC coding region determinant (CRD). In association with NMD1, plays a role in the rRNA quality control process during cell cycle progression. Acts as a loading factor for POLB onto non-incised AP sites in DNA and stimulates the 5'-terminal deoxyribose 5'-phosphate (dRp) excision activity of POLB. Exerts reversible nuclear redox activity to regulate DNA binding affinity and transcriptional activity of transcriptional factors by controlling the redox status of their DNA-binding domain, such as the FOS/JUN AP-1 complex after exposure to IR. Involved in calcium-dependent down-regulation of parathyroid hormone (PTH) expression by binding to negative calcium response elements (nCaREs). Together with HNRNPL or the dimer XRCC5/XRCC6, associates with nCaRE, acting as an activator of transcriptional repression. May also play a role in the epigenetic regulation of gene expression by participating in DNA demethylation. Stimulates the YBX1-mediated MDR1 promoter activity, when acetylated at Lys-6 and Lys-7, leading to drug resistance. Plays a role in protection from granzyme-mediated cellular repair leading to cell death. Binds DNA and RNA. Associates, together with YBX1, on the MDR1 promoter. Together with NPM1, associates with rRNA. In Rattus norvegicus (Rat), this protein is DNA repair nuclease/redox regulator APEX1 (Apex1).